The chain runs to 284 residues: tRNA uridine(34) hydroxylase (284 aa).

In terms of domain architecture, Rhodanese spans 132 to 226 (TGRPVVMLDT…YFEEVGGAHY (95 aa)). C186 acts as the Cysteine persulfide intermediate in catalysis.

It belongs to the TrhO family.

It catalyses the reaction uridine(34) in tRNA + AH2 + O2 = 5-hydroxyuridine(34) in tRNA + A + H2O. Catalyzes oxygen-dependent 5-hydroxyuridine (ho5U) modification at position 34 in tRNAs. The chain is tRNA uridine(34) hydroxylase from Burkholderia cenocepacia (strain ATCC BAA-245 / DSM 16553 / LMG 16656 / NCTC 13227 / J2315 / CF5610) (Burkholderia cepacia (strain J2315)).